Here is a 229-residue protein sequence, read N- to C-terminus: Peroxiredoxin-like 2A (229 aa).

Residues 14 to 112 form a thioredoxin fold region; it reads MWSIGVGAFG…DELGVPLYAV (99 aa). Catalysis depends on redox-active residues Cys-85 and Cys-88.

This sequence belongs to the peroxiredoxin-like PRXL2 family. PRXL2A subfamily. In terms of tissue distribution, expressed by the principal cells of the epididymis. Detected in the head region of epididymal sperm (at protein level). Expressed in bone marrow.

It localises to the cytoplasm. Its subcellular location is the secreted. Functionally, involved in redox regulation of the cell. Acts as an antioxidant. Inhibits TNFSF11-induced NFKB1 and JUN activation and osteoclast differentiation. May affect bone resorption and help to maintain bone mass. Acts as a negative regulator of macrophage-mediated inflammation by inhibiting macrophage production of inflammatory cytokines, probably through suppression of the MAPK signaling pathway. This is Peroxiredoxin-like 2A from Rattus norvegicus (Rat).